Reading from the N-terminus, the 790-residue chain is Sodium- and chloride-dependent glycine transporter 2 (790 aa).

Positions 1–39 (MDYVNVVDGSKKTMNSPEGAAPGLIGATGITNPTPDNDL) are disordered. Topologically, residues 1–192 (MDYVNVVDGS…ARGNWSNKLD (192 aa)) are cytoplasmic. 3 helical membrane passes run 193 to 213 (FILS…FPYL), 220 to 240 (GAFL…IFYL), and 264 to 284 (GCGI…NIIM). Na(+) is bound by residues Gly199, Ala201, Val202, and Asn206. Residues 285–387 (CYTIFYLFAS…GIEYPGEIRW (103 aa)) are Extracellular-facing. A disulfide bridge connects residues Cys304 and Cys313. N-linked (GlcNAc...) asparagine glycans are attached at residues Asn336, Asn346, Asn351, and Asn357. Helical transmembrane passes span 388 to 408 (PLVF…AKGI), 427 to 447 (VILL…WWFI), and 463 to 483 (AATQ…TLSS). Ser470 and Asn502 together coordinate Na(+). 6 helical membrane-spanning segments follow: residues 504-524 (ATSI…AHIL), 556-576 (WAII…FATI), 597-617 (LFTL…ITQG), 631-651 (SYSL…IYGL), 672-692 (ICWA…SFYQ), and 708-728 (MVMG…MFVI). Na(+)-binding residues include Leu567 and Asp570. The Cytoplasmic portion of the chain corresponds to 729–790 (KMFLAPGTFI…PKDFELGTQC (62 aa)).

It belongs to the sodium:neurotransmitter symporter (SNF) (TC 2.A.22) family. SLC6A5 subfamily. In terms of tissue distribution, first expressed in late neurula stages in the anterior spinal cord, where expression intensifies through the tailbud stages, and by hatching, expression is seen in the hindbrain. During late hatching stages, expression extends along most of the length of the spinal cord, mildly intensifies in the hindbrain, and appears in localized regions of the lateral forebrain and medial midbrain. By the swimming tadpole stage, weak expression appears in the anterior hindbrain, with stronger expression in the posterior, postmitotic neurons.

Its subcellular location is the cell membrane. It catalyses the reaction glycine(out) + chloride(out) + 3 Na(+)(out) = glycine(in) + chloride(in) + 3 Na(+)(in). Its function is as follows. Sodium- and chloride-dependent glycine transporter. Terminates the action of glycine by its high affinity sodium-dependent reuptake into presynaptic terminals. May be responsible for the termination of neurotransmission at strychnine-sensitive glycinergic synapses. The protein is Sodium- and chloride-dependent glycine transporter 2 of Xenopus laevis (African clawed frog).